The sequence spans 154 residues: Xanthine-guanine phosphoribosyltransferase (154 aa).

5-phospho-alpha-D-ribose 1-diphosphate contacts are provided by residues 37–38 (RG), Arg69, and 88–96 (DDLVDSGDT). Arg69 is a GMP binding site. Asp89 lines the Mg(2+) pocket. Guanine is bound by residues Asp92 and Ile135. 2 residues coordinate xanthine: Asp92 and Ile135. GMP contacts are provided by residues 92–96 (DSGDT) and 134–135 (WI).

The protein belongs to the purine/pyrimidine phosphoribosyltransferase family. XGPT subfamily. In terms of assembly, homotetramer. It depends on Mg(2+) as a cofactor.

Its subcellular location is the cell inner membrane. It carries out the reaction GMP + diphosphate = guanine + 5-phospho-alpha-D-ribose 1-diphosphate. It catalyses the reaction XMP + diphosphate = xanthine + 5-phospho-alpha-D-ribose 1-diphosphate. The catalysed reaction is IMP + diphosphate = hypoxanthine + 5-phospho-alpha-D-ribose 1-diphosphate. It participates in purine metabolism; GMP biosynthesis via salvage pathway; GMP from guanine: step 1/1. It functions in the pathway purine metabolism; XMP biosynthesis via salvage pathway; XMP from xanthine: step 1/1. Functionally, purine salvage pathway enzyme that catalyzes the transfer of the ribosyl-5-phosphate group from 5-phospho-alpha-D-ribose 1-diphosphate (PRPP) to the N9 position of the 6-oxopurines guanine and xanthine to form the corresponding ribonucleotides GMP (guanosine 5'-monophosphate) and XMP (xanthosine 5'-monophosphate), with the release of PPi. To a lesser extent, also acts on hypoxanthine. This is Xanthine-guanine phosphoribosyltransferase from Vibrio cholerae serotype O1 (strain ATCC 39541 / Classical Ogawa 395 / O395).